The following is a 1377-amino-acid chain: DNA-directed RNA polymerase subunit beta' (1377 aa).

The Zn(2+) site is built by Cys-70, Cys-72, Cys-85, and Cys-88. Mg(2+) contacts are provided by Asp-460, Asp-462, and Asp-464. Positions 808, 882, 889, and 892 each coordinate Zn(2+).

The protein belongs to the RNA polymerase beta' chain family. As to quaternary structure, the RNAP catalytic core consists of 2 alpha, 1 beta, 1 beta' and 1 omega subunit. When a sigma factor is associated with the core the holoenzyme is formed, which can initiate transcription. Requires Mg(2+) as cofactor. The cofactor is Zn(2+).

The enzyme catalyses RNA(n) + a ribonucleoside 5'-triphosphate = RNA(n+1) + diphosphate. Functionally, DNA-dependent RNA polymerase catalyzes the transcription of DNA into RNA using the four ribonucleoside triphosphates as substrates. This is DNA-directed RNA polymerase subunit beta' from Geotalea daltonii (strain DSM 22248 / JCM 15807 / FRC-32) (Geobacter daltonii).